The sequence spans 819 residues: Putative U-box domain-containing protein 53 (819 aa).

2 disordered regions span residues 208–309 (TSDT…NPQF) and 398–433 (KETE…KEKL). The span at 223-237 (ERTSSSCSSGSGANS) shows a compositional bias: low complexity. A compositionally biased stretch (polar residues) spans 238 to 260 (DVMSNALKSNPHTLSNKRMQNLP). Residues 278–296 (DETKKRSSDAAEEASKRSS) show a composition bias toward basic and acidic residues. Polar residues predominate over residues 297 to 307 (PETSRSVSWNP). Positions 395-437 (IAKKETEKFEQKRREEREAAQRREAEMKATHEAKEKEKLEESS) form a coiled coil. Residues 460-728 (FSEDLKIGMG…DLEDQILPVL (269 aa)) form the Protein kinase domain. Residues 466-474 (IGMGAYGDV) and Lys487 each bind ATP. Asp582 serves as the catalytic Proton acceptor. The U-box domain occupies 748–819 (QPPSHFFCPL…AIVEWRNRNQ (72 aa)).

It belongs to the protein kinase superfamily. Ser/Thr protein kinase family.

The enzyme catalyses L-seryl-[protein] + ATP = O-phospho-L-seryl-[protein] + ADP + H(+). It carries out the reaction L-threonyl-[protein] + ATP = O-phospho-L-threonyl-[protein] + ADP + H(+). The catalysed reaction is S-ubiquitinyl-[E2 ubiquitin-conjugating enzyme]-L-cysteine + [acceptor protein]-L-lysine = [E2 ubiquitin-conjugating enzyme]-L-cysteine + N(6)-ubiquitinyl-[acceptor protein]-L-lysine.. The protein operates within protein modification; protein ubiquitination. Functions as an E3 ubiquitin ligase. This Arabidopsis thaliana (Mouse-ear cress) protein is Putative U-box domain-containing protein 53 (PUB53).